We begin with the raw amino-acid sequence, 451 residues long: UDP-N-acetylmuramoylalanine--D-glutamate ligase (451 aa).

Residue 120 to 126 participates in ATP binding; that stretch reads GSNGKTT.

It belongs to the MurCDEF family.

Its subcellular location is the cytoplasm. It carries out the reaction UDP-N-acetyl-alpha-D-muramoyl-L-alanine + D-glutamate + ATP = UDP-N-acetyl-alpha-D-muramoyl-L-alanyl-D-glutamate + ADP + phosphate + H(+). Its pathway is cell wall biogenesis; peptidoglycan biosynthesis. Its function is as follows. Cell wall formation. Catalyzes the addition of glutamate to the nucleotide precursor UDP-N-acetylmuramoyl-L-alanine (UMA). The sequence is that of UDP-N-acetylmuramoylalanine--D-glutamate ligase from Bacillus pumilus (strain SAFR-032).